Here is a 123-residue protein sequence, read N- to C-terminus: Small ribosomal subunit protein uS12c (123 aa).

Positions Arg-9–Arg-31 are disordered.

This sequence belongs to the universal ribosomal protein uS12 family. Part of the 30S ribosomal subunit.

It is found in the plastid. The protein resides in the chloroplast. In terms of biological role, with S4 and S5 plays an important role in translational accuracy. Located at the interface of the 30S and 50S subunits. The chain is Small ribosomal subunit protein uS12c (rps12) from Spirogyra maxima (Green alga).